Reading from the N-terminus, the 227-residue chain is Phosphatidylserine decarboxylase proenzyme (227 aa).

Ser184 acts as the Schiff-base intermediate with substrate; via pyruvic acid in catalysis. Residue Ser184 is modified to Pyruvic acid (Ser); by autocatalysis.

This sequence belongs to the phosphatidylserine decarboxylase family. PSD-A subfamily. As to quaternary structure, heterodimer of a large membrane-associated beta subunit and a small pyruvoyl-containing alpha subunit. Pyruvate serves as cofactor. Is synthesized initially as an inactive proenzyme. Formation of the active enzyme involves a self-maturation process in which the active site pyruvoyl group is generated from an internal serine residue via an autocatalytic post-translational modification. Two non-identical subunits are generated from the proenzyme in this reaction, and the pyruvate is formed at the N-terminus of the alpha chain, which is derived from the carboxyl end of the proenzyme. The post-translation cleavage follows an unusual pathway, termed non-hydrolytic serinolysis, in which the side chain hydroxyl group of the serine supplies its oxygen atom to form the C-terminus of the beta chain, while the remainder of the serine residue undergoes an oxidative deamination to produce ammonia and the pyruvoyl prosthetic group on the alpha chain.

Its subcellular location is the cell membrane. It catalyses the reaction a 1,2-diacyl-sn-glycero-3-phospho-L-serine + H(+) = a 1,2-diacyl-sn-glycero-3-phosphoethanolamine + CO2. Its pathway is phospholipid metabolism; phosphatidylethanolamine biosynthesis; phosphatidylethanolamine from CDP-diacylglycerol: step 2/2. Functionally, catalyzes the formation of phosphatidylethanolamine (PtdEtn) from phosphatidylserine (PtdSer). This Ehrlichia ruminantium (strain Welgevonden) protein is Phosphatidylserine decarboxylase proenzyme.